We begin with the raw amino-acid sequence, 514 residues long: 1-pyrroline-5-carboxylate dehydrogenase (514 aa).

Active-site residues include glutamate 286 and cysteine 320.

It belongs to the aldehyde dehydrogenase family. RocA subfamily.

It catalyses the reaction L-glutamate 5-semialdehyde + NAD(+) + H2O = L-glutamate + NADH + 2 H(+). It functions in the pathway amino-acid degradation; L-proline degradation into L-glutamate; L-glutamate from L-proline: step 2/2. The protein is 1-pyrroline-5-carboxylate dehydrogenase of Staphylococcus haemolyticus (strain JCSC1435).